A 570-amino-acid chain; its full sequence is Glutamate--tRNA ligase (570 aa).

The 'HIGH' region signature appears at 107 to 117 (PNPDFVLHLGS).

Belongs to the class-I aminoacyl-tRNA synthetase family. Glutamate--tRNA ligase type 2 subfamily.

The protein localises to the cytoplasm. It carries out the reaction tRNA(Glu) + L-glutamate + ATP = L-glutamyl-tRNA(Glu) + AMP + diphosphate. In terms of biological role, catalyzes the attachment of glutamate to tRNA(Glu) in a two-step reaction: glutamate is first activated by ATP to form Glu-AMP and then transferred to the acceptor end of tRNA(Glu). This Pyrobaculum aerophilum (strain ATCC 51768 / DSM 7523 / JCM 9630 / CIP 104966 / NBRC 100827 / IM2) protein is Glutamate--tRNA ligase.